A 220-amino-acid polypeptide reads, in one-letter code: Regulatory protein VanRB (220 aa).

Residues arginine 4–leucine 117 enclose the Response regulatory domain. A 4-aspartylphosphate modification is found at aspartate 53. A DNA-binding region (ompR/PhoB-type) is located at residues alanine 124–glutamate 218.

In terms of processing, may be phosphorylated by VanSB. May also be dephosphorylated by VanSB.

The protein resides in the cytoplasm. Functionally, member of the two-component regulatory system VanSB/VanRB. Activates the transcription of vanSB, vanYB and vanW in response to vancomycin which results in vancomycin resistance. The protein is Regulatory protein VanRB (vanRB) of Enterococcus faecalis (strain ATCC 700802 / V583).